The sequence spans 100 residues: MQTAPREYSTSGPTAVLAPTTNTQHYAPYSLYRFLSSHKLDLLLGIALLVFLYVITAAPKEVCQVVITGESVVIRNCQQPDRILANLNLSPWNGVKFPLL.

At 1 to 41 the chain is on the lumenal side; that stretch reads MQTAPREYSTSGPTAVLAPTTNTQHYAPYSLYRFLSSHKLD. Residues 42-59 form a helical membrane-spanning segment; it reads LLLGIALLVFLYVITAAP. At 60-100 the chain is on the cytoplasmic side; the sequence is KEVCQVVITGESVVIRNCQQPDRILANLNLSPWNGVKFPLL.

Belongs to the Tymovirales TGBp3 protein family.

It localises to the host endoplasmic reticulum membrane. In terms of biological role, plays a role in viral cell-to-cell propagation, by facilitating genome transport to neighboring plant cells through plasmosdesmata. May induce the formation of granular vesicles derived from the Endoplasmic reticulum, which align on actin filaments. In Narcissus mosaic virus (NMV), this protein is Movement protein TGBp3.